The following is a 124-amino-acid chain: Small ribosomal subunit protein uS12 (124 aa).

A 3-methylthioaspartic acid modification is found at D89.

The protein belongs to the universal ribosomal protein uS12 family. In terms of assembly, part of the 30S ribosomal subunit. Contacts proteins S8 and S17. May interact with IF1 in the 30S initiation complex.

With S4 and S5 plays an important role in translational accuracy. Functionally, interacts with and stabilizes bases of the 16S rRNA that are involved in tRNA selection in the A site and with the mRNA backbone. Located at the interface of the 30S and 50S subunits, it traverses the body of the 30S subunit contacting proteins on the other side and probably holding the rRNA structure together. The combined cluster of proteins S8, S12 and S17 appears to hold together the shoulder and platform of the 30S subunit. This chain is Small ribosomal subunit protein uS12, found in Buchnera aphidicola subsp. Cinara cedri (strain Cc).